Here is a 470-residue protein sequence, read N- to C-terminus: Histidine--tRNA ligase (470 aa).

Residues glycine 69–glutamate 99 are disordered. The span at glutamine 79–glycine 94 shows a compositional bias: basic and acidic residues.

Belongs to the class-II aminoacyl-tRNA synthetase family. As to quaternary structure, homodimer.

The protein resides in the cytoplasm. It carries out the reaction tRNA(His) + L-histidine + ATP = L-histidyl-tRNA(His) + AMP + diphosphate + H(+). This chain is Histidine--tRNA ligase, found in Nostoc punctiforme (strain ATCC 29133 / PCC 73102).